The primary structure comprises 206 residues: Thymidylate kinase (206 aa).

10–17 contributes to the ATP binding site; that stretch reads GVDGVGKT.

Belongs to the thymidylate kinase family.

It carries out the reaction dTMP + ATP = dTDP + ADP. In terms of biological role, phosphorylation of dTMP to form dTDP in both de novo and salvage pathways of dTTP synthesis. This is Thymidylate kinase from Bifidobacterium longum (strain NCC 2705).